The primary structure comprises 543 residues: Chaperonin GroEL (543 aa).

ATP is bound by residues 30–33 (TLGP), K51, 87–91 (DGTTT), G415, 480–482 (DAA), and D496.

The protein belongs to the chaperonin (HSP60) family. Forms a cylinder of 14 subunits composed of two heptameric rings stacked back-to-back. Interacts with the co-chaperonin GroES.

Its subcellular location is the cytoplasm. The enzyme catalyses ATP + H2O + a folded polypeptide = ADP + phosphate + an unfolded polypeptide.. Together with its co-chaperonin GroES, plays an essential role in assisting protein folding. The GroEL-GroES system forms a nano-cage that allows encapsulation of the non-native substrate proteins and provides a physical environment optimized to promote and accelerate protein folding. The chain is Chaperonin GroEL from Hydrogenobaculum sp. (strain Y04AAS1).